Here is a 430-residue protein sequence, read N- to C-terminus: Enolase (430 aa).

Glutamine 167 serves as a coordination point for (2R)-2-phosphoglycerate. Glutamate 209 (proton donor) is an active-site residue. The Mg(2+) site is built by aspartate 246, glutamate 287, and aspartate 314. 4 residues coordinate (2R)-2-phosphoglycerate: lysine 339, arginine 368, serine 369, and lysine 390. Catalysis depends on lysine 339, which acts as the Proton acceptor.

The protein belongs to the enolase family. It depends on Mg(2+) as a cofactor.

It localises to the cytoplasm. The protein resides in the secreted. The protein localises to the cell surface. It catalyses the reaction (2R)-2-phosphoglycerate = phosphoenolpyruvate + H2O. The protein operates within carbohydrate degradation; glycolysis; pyruvate from D-glyceraldehyde 3-phosphate: step 4/5. Catalyzes the reversible conversion of 2-phosphoglycerate (2-PG) into phosphoenolpyruvate (PEP). It is essential for the degradation of carbohydrates via glycolysis. This Prochlorococcus marinus (strain AS9601) protein is Enolase.